Consider the following 130-residue polypeptide: D-ribose pyranase (130 aa).

Residue histidine 20 is the Proton donor of the active site. Substrate contacts are provided by residues aspartate 28, histidine 97, and 119–121; that span reads YAN.

It belongs to the RbsD / FucU family. RbsD subfamily. Homodecamer.

Its subcellular location is the cytoplasm. The catalysed reaction is beta-D-ribopyranose = beta-D-ribofuranose. It functions in the pathway carbohydrate metabolism; D-ribose degradation; D-ribose 5-phosphate from beta-D-ribopyranose: step 1/2. Its function is as follows. Catalyzes the interconversion of beta-pyran and beta-furan forms of D-ribose. The protein is D-ribose pyranase of Thermoanaerobacter pseudethanolicus (strain ATCC 33223 / 39E) (Clostridium thermohydrosulfuricum).